The chain runs to 345 residues: NADH-quinone oxidoreductase subunit H (345 aa).

The Lumenal portion of the chain corresponds to 1 to 15 (MADFWATSLGQTLIL). Residues 16 to 35 (LAQGLGIIAFVMIGLLLLVW) traverse the membrane as a helical segment. At 36-86 (GDRKIWAAVQMRKGPNVVGAFGLLQSVADAAKYVFKEIVVPAGVDKPVYFL) the chain is on the cytoplasmic side. Residues 87-106 (APMLSLVLALLAWVVVPFNE) traverse the membrane as a helical segment. Residues 107-110 (GWVM) are Lumenal-facing. A helical membrane pass occupies residues 111–130 (ADINVAVLFVFAVSSLEVYG). Topologically, residues 131–156 (VIMGGWASNSKYPFLGSLRSAAQMIS) are cytoplasmic. The helical transmembrane segment at 157-176 (YEVSMGLIIVGVIISTGSMN) threads the bilayer. The Lumenal segment spans residues 177–191 (LSAIVEAQRGDFGLL). The helical transmembrane segment at 192–211 (NWYWLPHLPMVALFFISALA) threads the bilayer. Over 212–245 (ETNRPPFDLPEAESELVAGFMVEYSSTPYLLFMA) the chain is Cytoplasmic. A helical membrane pass occupies residues 246–265 (GEYIAVWLMCALTSVLFFGG). The Lumenal portion of the chain corresponds to 266–276 (WLSPIPGVPDG). The chain crosses the membrane as a helical span at residues 277–296 (VLWMVAKMAAVFFVFAMVKA). At 297-313 (IVPRYRYDQLMRIGWKV) the chain is on the cytoplasmic side. A helical transmembrane segment spans residues 314-333 (FLPLSLAWVVVVAFLAKFEV). Residues 334–345 (LGGFWARWSIGA) are Lumenal-facing.

Belongs to the complex I subunit 1 family. As to quaternary structure, NDH-1 is composed of 14 different subunits. Subunits NuoA, H, J, K, L, M, N constitute the membrane sector of the complex.

The protein resides in the cellular chromatophore membrane. The enzyme catalyses a quinone + NADH + 5 H(+)(in) = a quinol + NAD(+) + 4 H(+)(out). Its function is as follows. NDH-1 shuttles electrons from NADH, via FMN and iron-sulfur (Fe-S) centers, to quinones in the respiratory chain. The immediate electron acceptor for the enzyme in this species is believed to be ubiquinone. Couples the redox reaction to proton translocation (for every two electrons transferred, four hydrogen ions are translocated across the cytoplasmic membrane), and thus conserves the redox energy in a proton gradient. This subunit may bind ubiquinone. The polypeptide is NADH-quinone oxidoreductase subunit H (Rhodobacter capsulatus (Rhodopseudomonas capsulata)).